We begin with the raw amino-acid sequence, 867 residues long: Leucine--tRNA ligase (867 aa).

Residues 42 to 52 carry the 'HIGH' region motif; sequence PYPSGNLHMGH. The 'KMSKS' region motif lies at 625–629; that stretch reads KMSKS. Residue lysine 628 participates in ATP binding.

The protein belongs to the class-I aminoacyl-tRNA synthetase family.

The protein localises to the cytoplasm. The enzyme catalyses tRNA(Leu) + L-leucine + ATP = L-leucyl-tRNA(Leu) + AMP + diphosphate. The polypeptide is Leucine--tRNA ligase (Blochmanniella floridana).